Here is a 184-residue protein sequence, read N- to C-terminus: ATP synthase subunit b (184 aa).

The helical transmembrane segment at 19–39 (IIVGVILVLLLTWLIAKAVVP) threads the bilayer.

It belongs to the ATPase B chain family. F-type ATPases have 2 components, F(1) - the catalytic core - and F(0) - the membrane proton channel. F(1) has five subunits: alpha(3), beta(3), gamma(1), delta(1), epsilon(1). F(0) has three main subunits: a(1), b(2) and c(10-14). The alpha and beta chains form an alternating ring which encloses part of the gamma chain. F(1) is attached to F(0) by a central stalk formed by the gamma and epsilon chains, while a peripheral stalk is formed by the delta and b chains.

The protein localises to the cell membrane. Its function is as follows. F(1)F(0) ATP synthase produces ATP from ADP in the presence of a proton or sodium gradient. F-type ATPases consist of two structural domains, F(1) containing the extramembraneous catalytic core and F(0) containing the membrane proton channel, linked together by a central stalk and a peripheral stalk. During catalysis, ATP synthesis in the catalytic domain of F(1) is coupled via a rotary mechanism of the central stalk subunits to proton translocation. Functionally, component of the F(0) channel, it forms part of the peripheral stalk, linking F(1) to F(0). The sequence is that of ATP synthase subunit b from Cutibacterium acnes (strain DSM 16379 / KPA171202) (Propionibacterium acnes).